Consider the following 299-residue polypeptide: Mycothiol acetyltransferase (299 aa).

N-acetyltransferase domains follow at residues 1-156 and 149-299; these read MGWT…TYRG and VTMR…ARAL. Glutamate 33 contributes to the 1D-myo-inositol 2-(L-cysteinylamino)-2-deoxy-alpha-D-glucopyranoside binding site. Acetyl-CoA-binding positions include 75-77 and 83-88; these read LVV and RRGIGT. Glutamate 176, lysine 218, and glutamate 231 together coordinate 1D-myo-inositol 2-(L-cysteinylamino)-2-deoxy-alpha-D-glucopyranoside. Acetyl-CoA contacts are provided by residues 235 to 237 and 242 to 248; these read VGI and QGRGLGR. Position 269 (tyrosine 269) interacts with 1D-myo-inositol 2-(L-cysteinylamino)-2-deoxy-alpha-D-glucopyranoside. 274–279 provides a ligand contact to acetyl-CoA; the sequence is NTAALH.

It belongs to the acetyltransferase family. MshD subfamily. In terms of assembly, monomer.

The enzyme catalyses 1D-myo-inositol 2-(L-cysteinylamino)-2-deoxy-alpha-D-glucopyranoside + acetyl-CoA = mycothiol + CoA + H(+). Functionally, catalyzes the transfer of acetyl from acetyl-CoA to desacetylmycothiol (Cys-GlcN-Ins) to form mycothiol. In Rhodococcus erythropolis (strain PR4 / NBRC 100887), this protein is Mycothiol acetyltransferase.